The chain runs to 97 residues: Citrate lyase acyl carrier protein (97 aa).

At Ser14 the chain carries O-(phosphoribosyl dephospho-coenzyme A)serine.

It belongs to the CitD family. Oligomer with a subunit composition of (alpha,beta,gamma)6.

It is found in the cytoplasm. In terms of biological role, covalent carrier of the coenzyme of citrate lyase. The chain is Citrate lyase acyl carrier protein from Cronobacter sakazakii (strain ATCC BAA-894) (Enterobacter sakazakii).